The sequence spans 305 residues: Leucine-rich repeat-containing protein 25 (305 aa).

Residues 1–20 (MGGTLAWTLLLPLLLRESDS) form the signal peptide. Over 21–165 (LEPSCTVSSA…SCAPGLASAT (145 aa)) the chain is Extracellular. LRR repeat units follow at residues 39 to 59 (SATC…QSLR), 62 to 83 (NVIL…FFAH), and 86 to 107 (KLEV…LAAR). N-linked (GlcNAc...) asparagine glycosylation is found at N44 and N55. 2 N-linked (GlcNAc...) asparagine glycosylation sites follow: N130 and N148. The chain crosses the membrane as a helical span at residues 166–186 (IGAVVVSGCLLLGLAIAGPVL). At 187-305 (AWRLWRCRVA…DEEEYVIPGH (119 aa)) the chain is on the cytoplasmic side. A disordered region spans residues 204–229 (PWAAQDGPKPGLGLQPRYGSRSAPKP). Phosphotyrosine is present on Y284.

As to quaternary structure, interacts with RIGI. Interacts with SQSTM1. Interacts with p65/RELA; this interaction promotes the degradation of RELA through autophagy. In terms of tissue distribution, expressed in plasmacytoid dendritic cells (PDC), monocyte-derived dendritic cells (MDDC), granulocytes, monocytes, B-lymphocytes, peripheral blood leukocytes, spleen, bone marrow, and, to a lesser extent, lymph nodes, fetal liver, and appendix but not in thymus.

It localises to the membrane. The protein resides in the cytoplasm. Functionally, plays a role in the inhibition of RLR-mediated type I interferon signaling pathway by targeting RIGI for autophagic degradation. Interacts specifically with ISG15-associated RIGI to promote interaction between RIGI and the autophagic cargo receptor p62/SQSTM1 to mediate RIGI degradation via selective autophagy. Also plays a role in the inhibition of NF-kappa-B signaling pathway and inflammatory response by promoting the degradation of p65/RELA. The sequence is that of Leucine-rich repeat-containing protein 25 (LRRC25) from Homo sapiens (Human).